The sequence spans 600 residues: DNA ligase (600 aa).

Aspartate 258 lines the ATP pocket. Lysine 260 serves as the catalytic N6-AMP-lysine intermediate. ATP contacts are provided by arginine 265, arginine 280, glutamate 310, phenylalanine 350, arginine 427, and lysine 433.

This sequence belongs to the ATP-dependent DNA ligase family. Mg(2+) is required as a cofactor.

The catalysed reaction is ATP + (deoxyribonucleotide)n-3'-hydroxyl + 5'-phospho-(deoxyribonucleotide)m = (deoxyribonucleotide)n+m + AMP + diphosphate.. Inhibited by PCNA123 and PCNA323. Functionally, DNA ligase that seals nicks in double-stranded DNA during DNA replication, DNA recombination and DNA repair. This chain is DNA ligase, found in Sulfurisphaera tokodaii (strain DSM 16993 / JCM 10545 / NBRC 100140 / 7) (Sulfolobus tokodaii).